A 367-amino-acid polypeptide reads, in one-letter code: 2-oxoisovalerate dehydrogenase subunit alpha (367 aa).

Substrate contacts are provided by residues F66, Y95, 128–131 (MPEH), and S144. 94 to 96 (YYR) contributes to the thiamine diphosphate binding site. Thiamine diphosphate contacts are provided by residues 144–146 (SPI), 174–180 (GDGATSE), 204–208 (NFYAI), and H273. Residues D175, N204, and Y206 each contribute to the Mg(2+) site.

It belongs to the BCKDHA family. As to quaternary structure, heterotetramer of two alpha and two beta chains. Directly associated with ODBB in the E1 complex. The cofactor is thiamine diphosphate.

It carries out the reaction N(6)-[(R)-lipoyl]-L-lysyl-[protein] + 3-methyl-2-oxobutanoate + H(+) = N(6)-[(R)-S(8)-2-methylpropanoyldihydrolipoyl]-L-lysyl-[protein] + CO2. Functionally, the branched-chain alpha-keto dehydrogenase complex catalyzes the overall conversion of alpha-keto acids to acyl-CoA and CO(2). It contains multiple copies of three enzymatic components: branched-chain alpha-keto acid decarboxylase (E1), lipoamide acyltransferase (E2) and lipoamide dehydrogenase (E3). The polypeptide is 2-oxoisovalerate dehydrogenase subunit alpha (Thermus thermophilus (strain ATCC BAA-163 / DSM 7039 / HB27)).